The chain runs to 355 residues: Myosin-binding protein H-like (355 aa).

Composition is skewed to polar residues over residues 1-16 and 31-41; these read META…SQRQ and TSHQQEAGSPS. The segment at 1–41 is disordered; the sequence is METATTLEIASCSQRQVEAAADPADAKGPRTSHQQEAGSPS. Ser-39 carries the phosphoserine modification. Positions 46-140 constitute an Ig-like C2-type 1 domain; the sequence is PSIEEHPKIW…GGLQATATIN (95 aa). The Fibronectin type-III domain occupies 149–244; it reads PPQSIKLVDV…TADLAHIQKA (96 aa). The 85-residue stretch at 262–346 folds into the Ig-like C2-type 2 domain; the sequence is PKFTQPLADC…INALGEASVD (85 aa). A disulfide bond links Cys-283 and Cys-334. Arg-322 carries the post-translational modification Omega-N-methylarginine.

This sequence belongs to the immunoglobulin superfamily. MyBP family. Expressed in the atria as well as in discrete puncta throughout the right ventricular wall and septum.

Its subcellular location is the cytoplasm. The protein resides in the myofibril. It is found in the sarcomere. Functionally, myosin-binding protein which plays a role in cardiac function. Seems to regulate conduction in the atria and ventricular conduction systems. This is Myosin-binding protein H-like from Mus musculus (Mouse).